Reading from the N-terminus, the 159-residue chain is Ribosomal RNA large subunit methyltransferase H (159 aa).

Residues Leu-76, Gly-108, and 127 to 132 contribute to the S-adenosyl-L-methionine site; that span reads FGQLTL.

This sequence belongs to the RNA methyltransferase RlmH family. Homodimer.

Its subcellular location is the cytoplasm. It carries out the reaction pseudouridine(1915) in 23S rRNA + S-adenosyl-L-methionine = N(3)-methylpseudouridine(1915) in 23S rRNA + S-adenosyl-L-homocysteine + H(+). Specifically methylates the pseudouridine at position 1915 (m3Psi1915) in 23S rRNA. The polypeptide is Ribosomal RNA large subunit methyltransferase H (Streptococcus suis (strain 05ZYH33)).